The primary structure comprises 237 residues: Probable GTP-binding protein EngB (237 aa).

The EngB-type G domain maps to 23–209; sequence AVPEVAFAGR…QAVIAGWLNL (187 aa). GTP contacts are provided by residues 31-38, 58-62, 82-85, 149-152, and 187-190; these read GRSNAGKS, GRTQH, DLPG, TKAD, and LFSS. Mg(2+) contacts are provided by serine 38 and threonine 60. Residues 214–237 form a disordered region; it reads KAEREPAAANSVPPAVPPASDPAA. Residues 227–237 are compositionally biased toward pro residues; it reads PAVPPASDPAA.

Belongs to the TRAFAC class TrmE-Era-EngA-EngB-Septin-like GTPase superfamily. EngB GTPase family. Mg(2+) is required as a cofactor.

Functionally, necessary for normal cell division and for the maintenance of normal septation. This is Probable GTP-binding protein EngB from Cupriavidus taiwanensis (strain DSM 17343 / BCRC 17206 / CCUG 44338 / CIP 107171 / LMG 19424 / R1) (Ralstonia taiwanensis (strain LMG 19424)).